Reading from the N-terminus, the 226-residue chain is 7-cyano-7-deazaguanine synthase (226 aa).

8–18 (ISGGLDSTTCL) contacts ATP. Positions 188, 198, 201, and 204 each coordinate Zn(2+).

It belongs to the QueC family. Zn(2+) serves as cofactor.

It carries out the reaction 7-carboxy-7-deazaguanine + NH4(+) + ATP = 7-cyano-7-deazaguanine + ADP + phosphate + H2O + H(+). Its pathway is purine metabolism; 7-cyano-7-deazaguanine biosynthesis. In terms of biological role, catalyzes the ATP-dependent conversion of 7-carboxy-7-deazaguanine (CDG) to 7-cyano-7-deazaguanine (preQ(0)). This chain is 7-cyano-7-deazaguanine synthase, found in Coxiella burnetii (strain RSA 331 / Henzerling II).